A 141-amino-acid polypeptide reads, in one-letter code: Succinate dehydrogenase assembly factor 2, mitochondrial (141 aa).

This sequence belongs to the SDHAF2 family. In terms of assembly, interacts with the flavoprotein subunit within the SDH catalytic dimer.

Its subcellular location is the mitochondrion matrix. In terms of biological role, plays an essential role in the assembly of succinate dehydrogenase (SDH), an enzyme complex (also referred to as respiratory complex II) that is a component of both the tricarboxylic acid (TCA) cycle and the mitochondrial electron transport chain, and which couples the oxidation of succinate to fumarate with the reduction of ubiquinone (coenzyme Q) to ubiquinol. Required for flavinylation (covalent attachment of FAD) of the flavoprotein subunit of the SDH catalytic dimer. The sequence is that of Succinate dehydrogenase assembly factor 2, mitochondrial from Dictyostelium discoideum (Social amoeba).